The sequence spans 339 residues: Fructose-1,6-bisphosphatase isozyme 2 (339 aa).

The interval 3-10 (DRSPFETD) is important for interaction with ALDOA. Residues Val18 and 28-32 (TGELT) each bind AMP. Residues Asp69 and Glu98 each coordinate Mg(2+). 113 to 114 (KY) provides a ligand contact to AMP. Asp119, Leu121, and Asp122 together coordinate Mg(2+). Asp122 contacts substrate. Arg141 lines the AMP pocket. The Nuclear localization signal signature appears at 204–208 (KKKGK). 213–216 (NEGY) is a binding site for substrate. 2 positions are modified to phosphotyrosine: Tyr216 and Tyr219. Residues 245 to 249 (YVGSM), Tyr265, and Lys275 contribute to the substrate site. Residue Glu281 participates in Mg(2+) binding.

Belongs to the FBPase class 1 family. Homotetramer. Interacts with ALDOA; the interaction blocks inhibition by physiological concentrations of AMP and reduces inhibition by Ca(2+). Interacts with alpha-actinin and F-actin. The cofactor is Mg(2+).

Its subcellular location is the cell junction. The protein localises to the cytoplasm. The protein resides in the nucleus. It localises to the myofibril. It is found in the sarcomere. Its subcellular location is the z line. It catalyses the reaction beta-D-fructose 1,6-bisphosphate + H2O = beta-D-fructose 6-phosphate + phosphate. The protein operates within carbohydrate biosynthesis; gluconeogenesis. Subject to complex allosteric regulation. The enzyme can assume an active R-state, or an inactive T-state. Intermediate conformations may exist. AMP acts as an allosteric inhibitor. Fructose 2,6-bisphosphate acts as a competitive inhibitor. Strongly inhibited by Ca(2+). Its function is as follows. Catalyzes the hydrolysis of fructose 1,6-bisphosphate to fructose 6-phosphate in the presence of divalent cations and probably participates in glycogen synthesis from carbohydrate precursors, such as lactate. The protein is Fructose-1,6-bisphosphatase isozyme 2 (Fbp2) of Rattus norvegicus (Rat).